Reading from the N-terminus, the 614-residue chain is Vitamin B12 transporter BtuB (614 aa).

An N-terminal signal peptide occupies residues 1–20 (MIKKASLLTACSVTAFSAWA). Residues 26–33 (DTLVVTAN) carry the TonB box motif. The region spanning 38–152 (PRSTVLAPTT…IGGVVNIITT (115 aa)) is the TBDR plug domain. Residues Leu83, Ser85, Asn92, and 110–111 (VS) each bind cyanocob(III)alamin. In terms of domain architecture, TBDR beta-barrel spans 155-614 (EPGTEISAGW…EYTLSGSYTF (460 aa)). 3 consecutive transmembrane segments (beta stranded) span residues 158–165 (TEISAGWG), 169–178 (YQNYDVSTQQ), and 184–195 (TRVTLLGDYAHT). Residues Asp199, Gln211, Asp213, and Asp215 each contribute to the Ca(2+) site. A run of 2 beta stranded transmembrane segments spans residues 217–227 (FLSKTLYGALE) and 232–248 (DAWS…NRTN). Ca(2+) is bound by residues Tyr249 and Asp250. Ala251 contributes to the cyanocob(III)alamin binding site. Residue Asp261 coordinates Ca(2+). The next 14 beta stranded transmembrane spans lie at 263–277 (RKLY…LRYN), 279–296 (ELIK…KDYN), 309–325 (TLDE…NNVI), 328–337 (HGSIGAGVDW), 353–369 (YDQR…QQVG), 371–381 (FTFEGAARSDD), 385–400 (FGRH…WEFI), 403–417 (YRFI…KAPN), 434–443 (KSKQWEGAFE), 449–458 (VNWRISGYRN), 473–490 (YYNE…TANF), 494–509 (PLTH…ARNA), 517–529 (RRAK…QLDW), and 535–550 (DWGI…YDKD). Position 309 (Thr309) interacts with cyanocob(III)alamin. Residue Arg517 coordinates cyanocob(III)alamin. Position 551 (Tyr551) interacts with cyanocob(III)alamin. 3 beta stranded membrane-spanning segments follow: residues 558 to 572 (TVKM…LAVA), 585 to 596 (IANLFDKDYETV), and 602 to 614 (AGRE…SYTF). Positions 597–614 (YGYQTAGREYTLSGSYTF) match the TonB C-terminal box motif.

The protein belongs to the TonB-dependent receptor family. BtuB (TC 1.B.14.3.1) subfamily.

The protein localises to the cell outer membrane. Its function is as follows. Involved in the active translocation of vitamin B12 (cyanocobalamin) across the outer membrane to the periplasmic space. It derives its energy for transport by interacting with the trans-periplasmic membrane protein TonB. In Escherichia coli O9:H4 (strain HS), this protein is Vitamin B12 transporter BtuB.